Reading from the N-terminus, the 529-residue chain is Peptide chain release factor 3 (529 aa).

A tr-type G domain is found at 11 to 280 (AKRRTFAIIS…GLVEWAPAPM (270 aa)). Residues 20–27 (SHPDAGKT), 88–92 (DTPGH), and 142–145 (NKLD) each bind GTP.

Belongs to the TRAFAC class translation factor GTPase superfamily. Classic translation factor GTPase family. PrfC subfamily.

Its subcellular location is the cytoplasm. Its function is as follows. Increases the formation of ribosomal termination complexes and stimulates activities of RF-1 and RF-2. It binds guanine nucleotides and has strong preference for UGA stop codons. It may interact directly with the ribosome. The stimulation of RF-1 and RF-2 is significantly reduced by GTP and GDP, but not by GMP. The sequence is that of Peptide chain release factor 3 from Klebsiella pneumoniae (strain 342).